The following is an 86-amino-acid chain: Protein U17 (86 aa).

The polypeptide is Protein U17 (U17/U16) (Homo sapiens (Human)).